A 572-amino-acid polypeptide reads, in one-letter code: Sulfite reductase [NADPH] hemoprotein beta-component (572 aa).

Residues Cys-437, Cys-443, Cys-482, and Cys-486 each contribute to the [4Fe-4S] cluster site. Siroheme is bound at residue Cys-486.

It belongs to the nitrite and sulfite reductase 4Fe-4S domain family. As to quaternary structure, alpha(8)-beta(8). The alpha component is a flavoprotein, the beta component is a hemoprotein. Siroheme is required as a cofactor. The cofactor is [4Fe-4S] cluster.

It catalyses the reaction hydrogen sulfide + 3 NADP(+) + 3 H2O = sulfite + 3 NADPH + 4 H(+). It functions in the pathway sulfur metabolism; hydrogen sulfide biosynthesis; hydrogen sulfide from sulfite (NADPH route): step 1/1. In terms of biological role, component of the sulfite reductase complex that catalyzes the 6-electron reduction of sulfite to sulfide. This is one of several activities required for the biosynthesis of L-cysteine from sulfate. This Bacillus licheniformis (strain ATCC 14580 / DSM 13 / JCM 2505 / CCUG 7422 / NBRC 12200 / NCIMB 9375 / NCTC 10341 / NRRL NRS-1264 / Gibson 46) protein is Sulfite reductase [NADPH] hemoprotein beta-component.